Reading from the N-terminus, the 239-residue chain is Uridylate kinase (239 aa).

Residue 10-13 (KFSG) coordinates ATP. An involved in allosteric activation by GTP region spans residues 18-23 (GENGFG). G52 serves as a coordination point for UMP. ATP-binding residues include G53 and R57. UMP is bound by residues D73 and 134 to 141 (TGNPYFTT). ATP contacts are provided by T161, Y167, and D170.

It belongs to the UMP kinase family. As to quaternary structure, homohexamer.

It localises to the cytoplasm. It catalyses the reaction UMP + ATP = UDP + ADP. It functions in the pathway pyrimidine metabolism; CTP biosynthesis via de novo pathway; UDP from UMP (UMPK route): step 1/1. With respect to regulation, allosterically activated by GTP. Inhibited by UTP. Its function is as follows. Catalyzes the reversible phosphorylation of UMP to UDP. The polypeptide is Uridylate kinase (Campylobacter jejuni subsp. jejuni serotype O:6 (strain 81116 / NCTC 11828)).